We begin with the raw amino-acid sequence, 265 residues long: Undecaprenyl-diphosphatase 1 (265 aa).

7 helical membrane-spanning segments follow: residues 4–24 (IITA…PISS), 42–62 (AKTF…ILYH), 84–104 (FHVF…HDII), 108–128 (LFQP…MIFA), 184–204 (SEFS…LDLL), 217–237 (MFAV…VTFL), and 245–265 (LKPF…FVLL).

This sequence belongs to the UppP family.

It is found in the cell membrane. The enzyme catalyses di-trans,octa-cis-undecaprenyl diphosphate + H2O = di-trans,octa-cis-undecaprenyl phosphate + phosphate + H(+). In terms of biological role, catalyzes the dephosphorylation of undecaprenyl diphosphate (UPP). Confers resistance to bacitracin. This Bacillus thuringiensis subsp. konkukian (strain 97-27) protein is Undecaprenyl-diphosphatase 1.